We begin with the raw amino-acid sequence, 416 residues long: Muscle-specific homeobox protein tinman (416 aa).

2 stretches are compositionally biased toward polar residues: residues 1–11 (MLQHHQQQAQS) and 18–33 (YTQS…ADAL). 3 disordered regions span residues 1 to 33 (MLQH…ADAL), 246 to 305 (TASN…RKPR), and 391 to 416 (VMWP…MQHM). A compositionally biased stretch (low complexity) spans 281-295 (NSISGNSNPGSNSGS). A DNA-binding region (homeobox) is located at residues 301–360 (KRKPRVLFSQAQVLELECRFRLKKYLTGAEREIIAQKLNLSATQVKIWFQNRRYKSKRGD). Positions 397–416 (MQQSQQQQQHHAQQQQMQHM) are enriched in low complexity.

The protein resides in the nucleus. Required for the development of heart and visceral muscle; for the formation of somatic muscles. Has a crucial function in the early mesodermal subdivisions. This is Muscle-specific homeobox protein tinman (tin) from Drosophila melanogaster (Fruit fly).